The chain runs to 342 residues: Protein RecA (342 aa).

An ATP-binding site is contributed by 65-72 (GPESSGKT).

Belongs to the RecA family.

Its subcellular location is the cytoplasm. Functionally, can catalyze the hydrolysis of ATP in the presence of single-stranded DNA, the ATP-dependent uptake of single-stranded DNA by duplex DNA, and the ATP-dependent hybridization of homologous single-stranded DNAs. It interacts with LexA causing its activation and leading to its autocatalytic cleavage. The polypeptide is Protein RecA (Caldanaerobacter subterraneus subsp. tengcongensis (strain DSM 15242 / JCM 11007 / NBRC 100824 / MB4) (Thermoanaerobacter tengcongensis)).